The chain runs to 154 residues: Transcriptional repressor NrdR (154 aa).

A zinc finger spans residues 3–34 (CPFCTHPDTRVADSRLMEERNAVRRRRHCPNC). In terms of domain architecture, ATP-cone spans 49–139 (PAVIGPDKKR…LHKRFDNPAD (91 aa)).

Belongs to the NrdR family. It depends on Zn(2+) as a cofactor.

Functionally, negatively regulates transcription of bacterial ribonucleotide reductase nrd genes and operons by binding to NrdR-boxes. This chain is Transcriptional repressor NrdR, found in Neisseria meningitidis serogroup A / serotype 4A (strain DSM 15465 / Z2491).